Here is a 255-residue protein sequence, read N- to C-terminus: Zinc-finger homeodomain protein 6 (255 aa).

The disordered stretch occupies residues 1 to 35 (MEFRGHDEPVDEMGVAYGRTPPSSSSSPAASASAG). Over residues 21-35 (PPSSSSSPAASASAG) the composition is skewed to low complexity. Residues 45–93 (YHECLRNHAAAMGGHVVDGCREFMPMPGDAADALKCAACGCHRSFHRKD) form a ZF-HD dimerization-type; degenerate zinc finger. The segment covering 106–126 (PSPPTPRVPLLMPPPQPQPHP) has biased composition (pro residues). 2 disordered regions span residues 106–181 (PSPP…KFTP) and 226–255 (NNKS…QQQQ). Positions 139-153 (YHHTPSGSGGTTTES) are enriched in low complexity. The segment at residues 172-235 (RKRFRTKFTP…NNKSSIGSSS (64 aa)) is a DNA-binding region (homeobox). Over residues 240–255 (RRQPQEQQSQQQQQQQ) the composition is skewed to low complexity.

Homo- and heterodimer with other ZFHD proteins.

It is found in the nucleus. Functionally, putative transcription factor. The chain is Zinc-finger homeodomain protein 6 (ZHD6) from Oryza sativa subsp. japonica (Rice).